A 152-amino-acid chain; its full sequence is Transcriptional repressor NrdR (152 aa).

The segment at 3 to 34 (CPFCNHGELKVIDSRNAPEANAIKRRRECLKC) is a zinc-finger region. An ATP-cone domain is found at 48 to 138 (LQVLKRDGRY…VYRRFKDVGE (91 aa)).

Belongs to the NrdR family. Requires Zn(2+) as cofactor.

In terms of biological role, negatively regulates transcription of bacterial ribonucleotide reductase nrd genes and operons by binding to NrdR-boxes. The protein is Transcriptional repressor NrdR of Chlamydia pneumoniae (Chlamydophila pneumoniae).